The following is a 330-amino-acid chain: Ketol-acid reductoisomerase (NADP(+)) (330 aa).

A KARI N-terminal Rossmann domain is found at 2–182 (ARMYYDADAN…GGTRAGILET (181 aa)). Residues 25–28 (YGSQ), S51, S53, and 83–86 (DEFQ) each bind NADP(+). Residue H108 is part of the active site. G134 serves as a coordination point for NADP(+). Residues 183-328 (SFREETETDL…KDLRAMFSWL (146 aa)) form the KARI C-terminal knotted domain. Mg(2+) is bound by residues D191, E195, E227, and E231. Substrate is bound at residue S252.

This sequence belongs to the ketol-acid reductoisomerase family. Requires Mg(2+) as cofactor.

The catalysed reaction is (2R)-2,3-dihydroxy-3-methylbutanoate + NADP(+) = (2S)-2-acetolactate + NADPH + H(+). The enzyme catalyses (2R,3R)-2,3-dihydroxy-3-methylpentanoate + NADP(+) = (S)-2-ethyl-2-hydroxy-3-oxobutanoate + NADPH + H(+). The protein operates within amino-acid biosynthesis; L-isoleucine biosynthesis; L-isoleucine from 2-oxobutanoate: step 2/4. It participates in amino-acid biosynthesis; L-valine biosynthesis; L-valine from pyruvate: step 2/4. Involved in the biosynthesis of branched-chain amino acids (BCAA). Catalyzes an alkyl-migration followed by a ketol-acid reduction of (S)-2-acetolactate (S2AL) to yield (R)-2,3-dihydroxy-isovalerate. In the isomerase reaction, S2AL is rearranged via a Mg-dependent methyl migration to produce 3-hydroxy-3-methyl-2-ketobutyrate (HMKB). In the reductase reaction, this 2-ketoacid undergoes a metal-dependent reduction by NADPH to yield (R)-2,3-dihydroxy-isovalerate. The sequence is that of Ketol-acid reductoisomerase (NADP(+)) from Synechococcus sp. (strain ATCC 27144 / PCC 6301 / SAUG 1402/1) (Anacystis nidulans).